The sequence spans 596 residues: Heat shock factor protein 5 (596 aa).

Residues asparagine 10–leucine 200 mediate DNA binding. The disordered stretch occupies residues glutamate 541–histidine 576. Position 572 is a phosphoserine (serine 572).

The protein belongs to the HSF family. As to quaternary structure, homooligomer.

The protein localises to the nucleus. It localises to the chromosome. DNA-binding transcription factor that is essential for male fertility, spermatogenesis and meiotic prophase progression in spermatocytes under non-stress conditions. Positvely and negatively regulates gene expression to ensure progression of meiotic prophase beyond pachytene stage in spermatocytes. Plays a role in male germline meiotic sex chromosome remodeling and silencing through regulation of SMARCA4. The protein is Heat shock factor protein 5 (HSF5) of Homo sapiens (Human).